A 113-amino-acid chain; its full sequence is Large ribosomal subunit protein eL31 (113 aa).

This sequence belongs to the eukaryotic ribosomal protein eL31 family. In terms of assembly, component of the large ribosomal subunit (LSU). Mature yeast ribosomes consist of a small (40S) and a large (60S) subunit. The 40S small subunit contains 1 molecule of ribosomal RNA (18S rRNA) and at least 33 different proteins. The large 60S subunit contains 3 rRNA molecules (25S, 5.8S and 5S rRNA) and at least 46 different proteins.

The protein localises to the cytoplasm. Its function is as follows. Component of the ribosome, a large ribonucleoprotein complex responsible for the synthesis of proteins in the cell. The small ribosomal subunit (SSU) binds messenger RNAs (mRNAs) and translates the encoded message by selecting cognate aminoacyl-transfer RNA (tRNA) molecules. The large subunit (LSU) contains the ribosomal catalytic site termed the peptidyl transferase center (PTC), which catalyzes the formation of peptide bonds, thereby polymerizing the amino acids delivered by tRNAs into a polypeptide chain. The nascent polypeptides leave the ribosome through a tunnel in the LSU and interact with protein factors that function in enzymatic processing, targeting, and the membrane insertion of nascent chains at the exit of the ribosomal tunnel. The chain is Large ribosomal subunit protein eL31 (rpl31) from Schizosaccharomyces pombe (strain 972 / ATCC 24843) (Fission yeast).